A 156-amino-acid chain; its full sequence is Arginine repressor (156 aa).

Belongs to the ArgR family.

It is found in the cytoplasm. It functions in the pathway amino-acid biosynthesis; L-arginine biosynthesis [regulation]. In terms of biological role, regulates arginine biosynthesis genes. This is Arginine repressor from Escherichia fergusonii (strain ATCC 35469 / DSM 13698 / CCUG 18766 / IAM 14443 / JCM 21226 / LMG 7866 / NBRC 102419 / NCTC 12128 / CDC 0568-73).